The sequence spans 757 residues: Subtilisin-like protease SBT1.7 (757 aa).

Positions 1–24 (MSSSFLSSTAFFLLLCLGFCHVSS) are cleaved as a signal peptide. The propeptide occupies 25–106 (SSSDQGTYIV…VLPEHRYELH (82 aa)). The Inhibitor I9 domain maps to 31–106 (TYIVHMAKSQ…VLPEHRYELH (76 aa)). A Peptidase S8 domain is found at 102–610 (RYELHTTRTP…AGHVSPTTAT (509 aa)). Residue Asp139 is the Charge relay system of the active site. N-linked (GlcNAc...) asparagine glycosylation occurs at Asn170. A disordered region spans residues 196-219 (PIDESKESRSPRDDDGHGTHTSST). Residues 198–213 (DESKESRSPRDDDGHG) are compositionally biased toward basic and acidic residues. His212 serves as the catalytic Charge relay system. Residues Asn352, Asn376, and Asn379 are each glycosylated (N-linked (GlcNAc...) asparagine). Ser542 serves as the catalytic Charge relay system. Asn631 and Asn644 each carry an N-linked (GlcNAc...) asparagine glycan.

This sequence belongs to the peptidase S8 family. Expressed in immature siliques and at lower levels in stems and flowers. Widely expressed at low levels.

It localises to the secreted. The protein resides in the cell wall. Activated by calcium. Inhibited by the serine protease inhibitors 4-(2-aminoethyl)benzenesulphonyl fluoride (AEBSF), PMSF, di-isopropyl phosphofluoridate (DFP) and soybean trypsin inhibitor (SBTI). Not inhibited by benzamidine or iodoacetamide. Leupeptin and pepstatin A have a minor inhibitory action. Functionally, serine protease. Has a substrate preference for the hydrophobic residues Phe and Ala and the basic residue Asp in the P1 position, and for Asp, Leu or Ala in the P1' position. Essential for mucilage release from seed coats. Triggers the accumulation and/or activation of cell wall modifying enzymes necessary either for the loosening of the outer primary cell wall, or to facilitate swelling of the mucilage. This is Subtilisin-like protease SBT1.7 from Arabidopsis thaliana (Mouse-ear cress).